We begin with the raw amino-acid sequence, 401 residues long: Formate-dependent phosphoribosylglycinamide formyltransferase (401 aa).

Residues 22 to 23 (EL) and glutamate 82 each bind N(1)-(5-phospho-beta-D-ribosyl)glycinamide. Residues arginine 115, lysine 157, 162–167 (SSGKGQ), 197–200 (EGFI), and glutamate 205 each bind ATP. Residues 120 to 315 (RLAAESLGLP…EFELHARAIL (196 aa)) enclose the ATP-grasp domain. Mg(2+) is bound by residues glutamate 274 and glutamate 286. N(1)-(5-phospho-beta-D-ribosyl)glycinamide-binding positions include aspartate 293, lysine 362, and 369–370 (RR).

This sequence belongs to the PurK/PurT family. In terms of assembly, homodimer.

The catalysed reaction is N(1)-(5-phospho-beta-D-ribosyl)glycinamide + formate + ATP = N(2)-formyl-N(1)-(5-phospho-beta-D-ribosyl)glycinamide + ADP + phosphate + H(+). Its pathway is purine metabolism; IMP biosynthesis via de novo pathway; N(2)-formyl-N(1)-(5-phospho-D-ribosyl)glycinamide from N(1)-(5-phospho-D-ribosyl)glycinamide (formate route): step 1/1. Involved in the de novo purine biosynthesis. Catalyzes the transfer of formate to 5-phospho-ribosyl-glycinamide (GAR), producing 5-phospho-ribosyl-N-formylglycinamide (FGAR). Formate is provided by PurU via hydrolysis of 10-formyl-tetrahydrofolate. This chain is Formate-dependent phosphoribosylglycinamide formyltransferase, found in Cupriavidus taiwanensis (strain DSM 17343 / BCRC 17206 / CCUG 44338 / CIP 107171 / LMG 19424 / R1) (Ralstonia taiwanensis (strain LMG 19424)).